The sequence spans 117 residues: Large ribosomal subunit protein bL19 (117 aa).

This sequence belongs to the bacterial ribosomal protein bL19 family.

Its function is as follows. This protein is located at the 30S-50S ribosomal subunit interface and may play a role in the structure and function of the aminoacyl-tRNA binding site. In Shewanella denitrificans (strain OS217 / ATCC BAA-1090 / DSM 15013), this protein is Large ribosomal subunit protein bL19.